The sequence spans 191 residues: RNA polymerase sigma factor CnrH (191 aa).

The Polymerase core binding motif lies at 49–62; it reads DVVQDTFVAAWHAL. The segment at residues 156–175 is a DNA-binding region (H-T-H motif); the sequence is QPEAAAVLGLSVKAVEGRIG.

It belongs to the sigma-70 factor family. ECF subfamily.

Sigma factors are initiation factors that promote the attachment of RNA polymerase to specific initiation sites and are then released. This sigma factor regulates the genes for a membrane-located efflux system that confers resistance to nickel and cobalt. In terms of biological role, cnrH alone is able to activate CNR expression, while both CnrY and CrnX are needed for nickel induction of cnrH. Binds DNA in an RNA polymerase-dependent fashion. CnrH may be controlled by a CnrYX transmembrane anti-sigma factor complex which binds CnrH in the absence of Ni(2+). If Ni(2+) appears in the periplasm, it may be bound by CnrR (CnrX); the signal then would be transmitted by CnrY into the cytoplasm and CnrH would be released. This chain is RNA polymerase sigma factor CnrH (cnrH), found in Cupriavidus metallidurans (strain ATCC 43123 / DSM 2839 / NBRC 102507 / CH34) (Ralstonia metallidurans).